The sequence spans 462 residues: Trigger factor (462 aa).

The region spanning 163–259 is the PPIase FKBP-type domain; it reads TDYVNIDLQR…VNDVKRRDLP (97 aa). A disordered region spans residues 439 to 462; that stretch reads SREEFEEEMQQQQQQQAQRQRMAP. Low complexity predominate over residues 448-462; the sequence is QQQQQQQAQRQRMAP.

It belongs to the FKBP-type PPIase family. Tig subfamily.

It is found in the cytoplasm. It catalyses the reaction [protein]-peptidylproline (omega=180) = [protein]-peptidylproline (omega=0). Its function is as follows. Involved in protein export. Acts as a chaperone by maintaining the newly synthesized protein in an open conformation. Functions as a peptidyl-prolyl cis-trans isomerase. This Salinibacter ruber (strain DSM 13855 / M31) protein is Trigger factor.